The chain runs to 260 residues: Cell division protein DivIB (260 aa).

At 1 to 25 (MGAQDQNGKNHGGLFRDFQNRNVKK) the chain is on the cytoplasmic side. The helical transmembrane segment at 26 to 46 (MWPLVMPITIILLVMIFMISS) threads the bilayer. The Extracellular segment spans residues 47–260 (YSRVKKVTVS…STKTTSVQGY (214 aa)). In terms of domain architecture, POTRA spans 48–119 (SRVKKVTVSG…NQVKIKVEEY (72 aa)).

It belongs to the FtsQ/DivIB family. DivIB subfamily.

It localises to the cell membrane. Its function is as follows. Cell division protein that may be involved in stabilizing or promoting the assembly of the division complex. In Lentilactobacillus buchneri (strain NRRL B-30929) (Lactobacillus buchneri), this protein is Cell division protein DivIB.